The sequence spans 296 residues: N-acetylmuramic acid 6-phosphate etherase 2 (296 aa).

Residues 55–218 (IVANFKAGGR…STASMVGIGK (164 aa)) enclose the SIS domain. Residue Glu-83 is the Proton donor of the active site. Glu-114 is a catalytic residue.

Belongs to the GCKR-like family. MurNAc-6-P etherase subfamily. As to quaternary structure, homodimer.

The enzyme catalyses N-acetyl-D-muramate 6-phosphate + H2O = N-acetyl-D-glucosamine 6-phosphate + (R)-lactate. Its pathway is amino-sugar metabolism; N-acetylmuramate degradation. Its function is as follows. Specifically catalyzes the cleavage of the D-lactyl ether substituent of MurNAc 6-phosphate, producing GlcNAc 6-phosphate and D-lactate. The chain is N-acetylmuramic acid 6-phosphate etherase 2 from Lactiplantibacillus plantarum (strain ATCC BAA-793 / NCIMB 8826 / WCFS1) (Lactobacillus plantarum).